We begin with the raw amino-acid sequence, 381 residues long: Phthiodiolone/phenolphthiodiolone dimycocerosates ketoreductase (381 aa).

This sequence belongs to the mer family. Phthiodiolone/phenolphthiodiolone dimycocerosates ketoreductase subfamily.

Catalyzes the reduction of the keto moiety of phthiodiolone dimycocerosates (DIM B) and glycosylated phenolphthiodiolone dimycocerosates to form the intermediate compounds phthiotriol and glycosylated phenolphthiotriol dimycocerosates during phthiocerol dimycocerosates (DIM A) and glycosylated phenolphthiocerol dimycocerosates (PGL) biosynthesis. The chain is Phthiodiolone/phenolphthiodiolone dimycocerosates ketoreductase from Mycobacterium tuberculosis (strain CDC 1551 / Oshkosh).